The sequence spans 125 residues: Mini-ribonuclease 3 (125 aa).

D11 is a catalytic residue.

Belongs to the MrnC RNase family. As to quaternary structure, homodimer. Mg(2+) serves as cofactor.

It localises to the cytoplasm. Functionally, involved in correct processing of both the 5' and 3' ends of 23S rRNA precursor. Processes 30S rRNA precursor transcript even in absence of ribonuclease 3 (Rnc); Rnc processes 30S rRNA into smaller rRNA precursors. The sequence is that of Mini-ribonuclease 3 from Acholeplasma laidlawii (strain PG-8A).